We begin with the raw amino-acid sequence, 73 residues long: Translation initiation factor IF-1 3 (73 aa).

The 72-residue stretch at 1–72 (MAKEELVEFG…TKGRINYRHK (72 aa)) folds into the S1-like domain.

The protein belongs to the IF-1 family. In terms of assembly, component of the 30S ribosomal translation pre-initiation complex which assembles on the 30S ribosome in the order IF-2 and IF-3, IF-1 and N-formylmethionyl-tRNA(fMet); mRNA recruitment can occur at any time during PIC assembly.

The protein resides in the cytoplasm. Functionally, one of the essential components for the initiation of protein synthesis. Stabilizes the binding of IF-2 and IF-3 on the 30S subunit to which N-formylmethionyl-tRNA(fMet) subsequently binds. Helps modulate mRNA selection, yielding the 30S pre-initiation complex (PIC). Upon addition of the 50S ribosomal subunit IF-1, IF-2 and IF-3 are released leaving the mature 70S translation initiation complex. The protein is Translation initiation factor IF-1 3 of Cupriavidus metallidurans (strain ATCC 43123 / DSM 2839 / NBRC 102507 / CH34) (Ralstonia metallidurans).